A 160-amino-acid chain; its full sequence is Phosphopantetheine adenylyltransferase (160 aa).

A substrate-binding site is contributed by Thr10. Residues Thr10–Phe11 and His18 each bind ATP. 3 residues coordinate substrate: Lys42, Leu74, and Arg88. ATP is bound by residues Gly89 to Arg91, Glu99, and Asn124 to Thr130.

This sequence belongs to the bacterial CoaD family. In terms of assembly, homohexamer. Mg(2+) is required as a cofactor.

It is found in the cytoplasm. It carries out the reaction (R)-4'-phosphopantetheine + ATP + H(+) = 3'-dephospho-CoA + diphosphate. It participates in cofactor biosynthesis; coenzyme A biosynthesis; CoA from (R)-pantothenate: step 4/5. Reversibly transfers an adenylyl group from ATP to 4'-phosphopantetheine, yielding dephospho-CoA (dPCoA) and pyrophosphate. In Aeromonas hydrophila subsp. hydrophila (strain ATCC 7966 / DSM 30187 / BCRC 13018 / CCUG 14551 / JCM 1027 / KCTC 2358 / NCIMB 9240 / NCTC 8049), this protein is Phosphopantetheine adenylyltransferase.